A 186-amino-acid chain; its full sequence is uncharacterized protein (186 aa).

This is an uncharacterized protein from Acanthamoeba polyphaga mimivirus (APMV).